The chain runs to 343 residues: Fructose-1,6-bisphosphatase class 1 (343 aa).

Residues glutamate 99, aspartate 121, leucine 123, and aspartate 124 each coordinate Mg(2+). Residues 124–127, asparagine 218, tyrosine 250, and lysine 283 contribute to the substrate site; that span reads DGSS. Mg(2+) is bound at residue glutamate 289.

It belongs to the FBPase class 1 family. As to quaternary structure, homotetramer. The cofactor is Mg(2+).

It localises to the cytoplasm. It catalyses the reaction beta-D-fructose 1,6-bisphosphate + H2O = beta-D-fructose 6-phosphate + phosphate. It participates in carbohydrate biosynthesis; gluconeogenesis. The sequence is that of Fructose-1,6-bisphosphatase class 1 from Leptospira biflexa serovar Patoc (strain Patoc 1 / Ames).